The chain runs to 399 residues: Serine/threonine transporter SstT (399 aa).

Helical transmembrane passes span 8–28 (LSLV…AFLF), 37–57 (IFGE…VFVL), 77–97 (ILFL…IADL), 134–154 (PVVA…IILG), 178–198 (VIHL…AVTF), 212–232 (LLLV…PIMV), 284–304 (VIIP…ITVL), 312–332 (LGIS…SISA), and 348–370 (VACS…GMVI).

It belongs to the dicarboxylate/amino acid:cation symporter (DAACS) (TC 2.A.23) family.

It is found in the cell inner membrane. It carries out the reaction L-serine(in) + Na(+)(in) = L-serine(out) + Na(+)(out). The enzyme catalyses L-threonine(in) + Na(+)(in) = L-threonine(out) + Na(+)(out). In terms of biological role, involved in the import of serine and threonine into the cell, with the concomitant import of sodium (symport system). In Acinetobacter baylyi (strain ATCC 33305 / BD413 / ADP1), this protein is Serine/threonine transporter SstT.